The following is a 153-amino-acid chain: Protein DpnD (153 aa).

This Streptococcus pneumoniae serotype 4 (strain ATCC BAA-334 / TIGR4) protein is Protein DpnD.